The primary structure comprises 66 residues: Small ribosomal subunit protein bS21 (66 aa).

It belongs to the bacterial ribosomal protein bS21 family.

This is Small ribosomal subunit protein bS21 from Rickettsia africae (strain ESF-5).